The sequence spans 875 residues: Leucine--tRNA ligase (875 aa).

Positions 57 to 67 (PYPSGQIHMGH) match the 'HIGH' region motif. The 'KMSKS' region signature appears at 631 to 635 (KMSKS). Position 634 (K634) interacts with ATP.

The protein belongs to the class-I aminoacyl-tRNA synthetase family.

The protein resides in the cytoplasm. It carries out the reaction tRNA(Leu) + L-leucine + ATP = L-leucyl-tRNA(Leu) + AMP + diphosphate. The sequence is that of Leucine--tRNA ligase from Granulibacter bethesdensis (strain ATCC BAA-1260 / CGDNIH1).